The sequence spans 88 residues: Small ribosomal subunit protein uS17c (88 aa).

This sequence belongs to the universal ribosomal protein uS17 family. As to quaternary structure, part of the 30S ribosomal subunit.

The protein resides in the plastid. It is found in the cyanelle. One of the primary rRNA binding proteins, it binds specifically to the 5'-end of 16S ribosomal RNA. The polypeptide is Small ribosomal subunit protein uS17c (rps17) (Cyanophora paradoxa).